The primary structure comprises 327 residues: Phenylalanine--tRNA ligase alpha subunit (327 aa).

Glu-253 contacts Mg(2+).

It belongs to the class-II aminoacyl-tRNA synthetase family. Phe-tRNA synthetase alpha subunit type 1 subfamily. In terms of assembly, tetramer of two alpha and two beta subunits. Mg(2+) serves as cofactor.

It localises to the cytoplasm. The catalysed reaction is tRNA(Phe) + L-phenylalanine + ATP = L-phenylalanyl-tRNA(Phe) + AMP + diphosphate + H(+). The polypeptide is Phenylalanine--tRNA ligase alpha subunit (Laribacter hongkongensis (strain HLHK9)).